A 353-amino-acid polypeptide reads, in one-letter code: Glutamine synthetase cytosolic isozyme 1-5 (353 aa).

T2 carries the post-translational modification N-acetylthreonine. At S3 the chain carries Phosphoserine. The GS beta-grasp domain maps to 19 to 99 (IIAEYIWIGG…VMCDAYRPAG (81 aa)). Residues 106–353 (NRHKAVKIFD…TSMIAETTIL (248 aa)) enclose the GS catalytic domain.

This sequence belongs to the glutamine synthetase family. Homooctamer. As to expression, not expressed in roots.

Its subcellular location is the cytoplasm. It catalyses the reaction L-glutamate + NH4(+) + ATP = L-glutamine + ADP + phosphate + H(+). The polypeptide is Glutamine synthetase cytosolic isozyme 1-5 (GLN1-5) (Arabidopsis thaliana (Mouse-ear cress)).